Reading from the N-terminus, the 69-residue chain is Cold shock-like protein CspC (69 aa).

In terms of domain architecture, CSD spans 6–66; that stretch reads GQVKWFNESK…GQKGPAAVNV (61 aa).

It is found in the cytoplasm. The polypeptide is Cold shock-like protein CspC (cspC) (Shigella flexneri).